Here is a 183-residue protein sequence, read N- to C-terminus: 2-C-methyl-D-erythritol 2,4-cyclodiphosphate synthase (183 aa).

2 residues coordinate a divalent metal cation: Asp-8 and His-10. 4-CDP-2-C-methyl-D-erythritol 2-phosphate-binding positions include 8–10 (DVH) and 34–35 (HS). Position 42 (His-42) interacts with a divalent metal cation. 4-CDP-2-C-methyl-D-erythritol 2-phosphate is bound by residues 56–58 (DIG), 61–65 (FPDTD), 132–135 (TTEE), and Phe-139.

The protein belongs to the IspF family. Homotrimer. A divalent metal cation is required as a cofactor.

The enzyme catalyses 4-CDP-2-C-methyl-D-erythritol 2-phosphate = 2-C-methyl-D-erythritol 2,4-cyclic diphosphate + CMP. The protein operates within isoprenoid biosynthesis; isopentenyl diphosphate biosynthesis via DXP pathway; isopentenyl diphosphate from 1-deoxy-D-xylulose 5-phosphate: step 4/6. Involved in the biosynthesis of isopentenyl diphosphate (IPP) and dimethylallyl diphosphate (DMAPP), two major building blocks of isoprenoid compounds. Catalyzes the conversion of 4-diphosphocytidyl-2-C-methyl-D-erythritol 2-phosphate (CDP-ME2P) to 2-C-methyl-D-erythritol 2,4-cyclodiphosphate (ME-CPP) with a corresponding release of cytidine 5-monophosphate (CMP). The chain is 2-C-methyl-D-erythritol 2,4-cyclodiphosphate synthase from Lachnospira eligens (strain ATCC 27750 / DSM 3376 / VPI C15-48 / C15-B4) (Eubacterium eligens).